Here is a 378-residue protein sequence, read N- to C-terminus: AimR transcriptional regulator (378 aa).

As to quaternary structure, homodimer. Interacts with the viral arbitrium peptide, this interaction changes the oligomeric state of AimR from an active dimer to an inactive monomer leading to lysogeny.

Its function is as follows. Transcriptional regulator which is part of the latency-replication switch system that decides at the onset of infection whether to replicate and lyse the host or to lysogenize (latency) and keep the host viable. Activates the transcription of the aimX locus. Transcriptional activation of aimX seems to lead to the productive viral replication (lytic cycle), aimX possibly acting as a regulatory non-coding RNA. The chain is AimR transcriptional regulator (aimR) from Bacillus phage phi3T (Bacteriophage phi-3T).